The sequence spans 218 residues: Adenylate kinase (218 aa).

10-15 (GAGKGT) contacts ATP. Positions 30 to 59 (STGDMLRAAVKAGSPLGLKVKEVMATGGLV) are NMP. AMP contacts are provided by residues Thr-31, Arg-36, 57–59 (GLV), 85–88 (GFPR), and Gln-92. The segment at 122-159 (GRRVHEASGRVYHVDYNPPKVEGKDDVTGEPLVQREDD) is LID. ATP-binding positions include Arg-123 and 132-133 (VY). 2 residues coordinate AMP: Arg-156 and Arg-167. Gly-203 contributes to the ATP binding site.

Belongs to the adenylate kinase family. In terms of assembly, monomer.

The protein localises to the cytoplasm. The enzyme catalyses AMP + ATP = 2 ADP. It functions in the pathway purine metabolism; AMP biosynthesis via salvage pathway; AMP from ADP: step 1/1. Its function is as follows. Catalyzes the reversible transfer of the terminal phosphate group between ATP and AMP. Plays an important role in cellular energy homeostasis and in adenine nucleotide metabolism. The protein is Adenylate kinase of Hahella chejuensis (strain KCTC 2396).